Reading from the N-terminus, the 566-residue chain is NAD-dependent malic enzyme (566 aa).

Tyr105 functions as the Proton donor in the catalytic mechanism. Arg158 is an NAD(+) binding site. The Proton acceptor role is filled by Lys176. The a divalent metal cation site is built by Glu247, Asp248, and Asp271. Residues Asp271 and Asn419 each coordinate NAD(+).

This sequence belongs to the malic enzymes family. Homotetramer. The cofactor is Mg(2+). Requires Mn(2+) as cofactor.

The catalysed reaction is (S)-malate + NAD(+) = pyruvate + CO2 + NADH. The enzyme catalyses oxaloacetate + H(+) = pyruvate + CO2. In Acinetobacter baylyi (strain ATCC 33305 / BD413 / ADP1), this protein is NAD-dependent malic enzyme.